The sequence spans 1470 residues: Membrane-associated guanylate kinase, WW and PDZ domain-containing protein 3 (1470 aa).

Positions 18–108 (CAVSWAGPPG…PIRLKTVKPG (91 aa)) constitute a PDZ 1 domain. An interaction with ADRB1 and TGFA region spans residues 18–108 (CAVSWAGPPG…PIRLKTVKPG (91 aa)). One can recognise a Guanylate kinase-like domain in the interval 116 to 290 (RHYLSLQFQK…RSMDFRNYMM (175 aa)). 123 to 130 (FQKGSIDH) lines the ATP pocket. Residues 184-266 (TYDGNFYGTP…ETREMHSESS (83 aa)) form a disordered region. A compositionally biased stretch (pro residues) spans 193 to 204 (PKPPAEPSPFQP). Phosphoserine is present on Ser236. Residues 238-247 (LPEEEEDEDK) show a composition bias toward acidic residues. WW domains are found at residues 296 to 329 (EPLP…DPRL) and 342 to 375 (GELP…NPVE). A PDZ 2 domain is found at 413 to 495 (RASLKKSTMG…NQYVNLTLCR (83 aa)). Positions 413–495 (RASLKKSTMG…NQYVNLTLCR (83 aa)) are interaction with PTEN. Residues 550 to 575 (LLSSDRLNGPSDSNEQRASLASSGSS) form a disordered region. The span at 559 to 575 (PSDSNEQRASLASSGSS) shows a compositional bias: polar residues. Residues 581-657 (TIPLVKGPKG…GADVPLLILR (77 aa)) form the PDZ 3 domain. Phosphoserine is present on Ser598. A disordered region spans residues 665–700 (KTAKMKTDTKETSGSLETINEPTPQPMPFPPSIIRS). Residues 676–686 (TSGSLETINEP) show a composition bias toward polar residues. Ser702 is subject to Phosphoserine. The PDZ 4 domain maps to 729 to 811 (DVFLRKQESG…NGHVLLTVRR (83 aa)). Residues 729–811 (DVFLRKQESG…NGHVLLTVRR (83 aa)) are interaction with ADGRB1. A disordered region spans residues 818 to 847 (KQPEDESPQAFSQSGSPRLNRTELPTRSAP). The segment covering 826 to 847 (QAFSQSGSPRLNRTELPTRSAP) has biased composition (polar residues). 2 positions are modified to phosphoserine: Ser833 and Ser916. One can recognise a PDZ 5 domain in the interval 852–939 (DVILQRKENE…TVTLTVVAEE (88 aa)). Residues 852-939 (DVILQRKENE…TVTLTVVAEE (88 aa)) form an interaction with LPAR2 and GRIN2B region. Residues 939 to 976 (EEHHGPPSGTNSARQSPALQHRPMGQAQATHIPGDRTA) form a disordered region. Positions 946-956 (SGTNSARQSPA) are enriched in polar residues. Residues 1022–1104 (PVELERGPRG…KVLLLLRPGT (83 aa)) enclose the PDZ 6 domain. 2 disordered regions span residues 1124-1146 (IYDE…ESHV) and 1167-1470 (DTVQ…DKQL). A compositionally biased stretch (polar residues) spans 1175–1191 (TLNGSQPEMKYQSIQKN). 2 stretches are compositionally biased toward basic and acidic residues: residues 1193-1209 (SKKD…KNLL) and 1230-1263 (RHSE…KGEN). Polar residues predominate over residues 1285–1304 (SSSPRKQQKIGGNSLSNTEG). Residue Ser1321 is modified to Phosphoserine. 4 stretches are compositionally biased toward basic and acidic residues: residues 1326–1340 (PEGK…KDLK), 1350–1361 (RSPEKRSSKVDE), 1377–1397 (VSEK…DKTG), and 1422–1431 (EVTDRGKERA).

It belongs to the MAGUK family. In terms of assembly, interacts with ADRB1, ADGRB1, LPAR2/EDG4, FZD4, FZD7, GRIN2B, TGFA and VANGL2. Interacts with PTEN. Interacts with ADRB1, PTPRB and unidentified tyrosine phosphorylated proteins. Interacts with DLL1. Interacts with PRRG4 (via cytoplasmic domain).

The protein localises to the cell membrane. The protein resides in the cell junction. Its subcellular location is the tight junction. It is found in the nucleus. Acts as a scaffolding protein at cell-cell junctions, thereby regulating various cellular and signaling processes. Cooperates with PTEN to modulate the kinase activity of AKT1. Its interaction with PTPRB and tyrosine phosphorylated proteins suggests that it may link receptor tyrosine phosphatase with its substrates at the plasma membrane. In polarized epithelial cells, involved in efficient trafficking of TGFA to the cell surface. Regulates the ability of LPAR2 to activate ERK and RhoA pathways. Regulates the JNK signaling cascade via its interaction with FZD4 and VANGL2. The polypeptide is Membrane-associated guanylate kinase, WW and PDZ domain-containing protein 3 (Magi3) (Rattus norvegicus (Rat)).